Here is a 273-residue protein sequence, read N- to C-terminus: Bifunctional protein FolD (273 aa).

Residues 149-151 and Val-215 contribute to the NADP(+) site; that span reads GLG.

It belongs to the tetrahydrofolate dehydrogenase/cyclohydrolase family. In terms of assembly, homodimer.

It catalyses the reaction (6R)-5,10-methylene-5,6,7,8-tetrahydrofolate + NADP(+) = (6R)-5,10-methenyltetrahydrofolate + NADPH. It carries out the reaction (6R)-5,10-methenyltetrahydrofolate + H2O = (6R)-10-formyltetrahydrofolate + H(+). It participates in one-carbon metabolism; tetrahydrofolate interconversion. In terms of biological role, catalyzes the oxidation of 5,10-methylenetetrahydrofolate to 5,10-methenyltetrahydrofolate and then the hydrolysis of 5,10-methenyltetrahydrofolate to 10-formyltetrahydrofolate. This Mycoplasma genitalium (strain ATCC 33530 / DSM 19775 / NCTC 10195 / G37) (Mycoplasmoides genitalium) protein is Bifunctional protein FolD.